The primary structure comprises 505 residues: UDP-N-acetylmuramate--L-alanine ligase (505 aa).

ATP is bound at residue 164 to 170; it reads GTHGKTT.

This sequence belongs to the MurCDEF family.

It localises to the cytoplasm. It catalyses the reaction UDP-N-acetyl-alpha-D-muramate + L-alanine + ATP = UDP-N-acetyl-alpha-D-muramoyl-L-alanine + ADP + phosphate + H(+). It functions in the pathway cell wall biogenesis; peptidoglycan biosynthesis. Functionally, cell wall formation. The chain is UDP-N-acetylmuramate--L-alanine ligase from Synechocystis sp. (strain ATCC 27184 / PCC 6803 / Kazusa).